A 138-amino-acid chain; its full sequence is Putative transcriptional regulatory protein NedR (138 aa).

Residues 1–25 (MCWGRSWTFGRSSSKGWRPTSSASS) form a disordered region. Residues 9-25 (FGRSSSKGWRPTSSASS) show a composition bias toward polar residues.

May serve as a transcriptional regulator. The polypeptide is Putative transcriptional regulatory protein NedR (nedR) (Micromonospora viridifaciens).